A 505-amino-acid polypeptide reads, in one-letter code: Protein disulfide-isomerase (505 aa).

The N-terminal stretch at Met1 to Ala20 is a signal peptide. Thioredoxin domains follow at residues Ser21–Pro128 and Phe335–Lys465. Residues Cys50, Cys53, Cys385, and Cys388 each act as nucleophile in the active site. 2 disulfides stabilise this stretch: Cys50/Cys53 and Cys385/Cys388. Positions Ile470–Leu505 are disordered. The span at Thr477–Ala488 shows a compositional bias: low complexity. Residues Thr489–Leu505 are compositionally biased toward basic and acidic residues. The Prevents secretion from ER signature appears at His502–Leu505.

It belongs to the protein disulfide isomerase family.

The protein resides in the endoplasmic reticulum lumen. The catalysed reaction is Catalyzes the rearrangement of -S-S- bonds in proteins.. Participates in the folding of proteins containing disulfide bonds, may be involved in glycosylation, prolyl hydroxylation and triglyceride transfer. This is Protein disulfide-isomerase from Humicola insolens (Soft-rot fungus).